The chain runs to 287 residues: IQ domain-containing protein K (287 aa).

The chain is IQ domain-containing protein K (IQCK) from Homo sapiens (Human).